A 472-amino-acid polypeptide reads, in one-letter code: F420-non-reducing hydrogenase subunit A (472 aa).

Ni(2+)-binding residues include cysteine 61, cysteine 64, cysteine 442, and cysteine 445.

This sequence belongs to the [NiFe]/[NiFeSe] hydrogenase large subunit family. As to quaternary structure, the F420-non-reducing hydrogenase is composed of three subunits; MvhA, MvhD and MvhG. It forms a complex with the heterodisulfide reductase (hdr). Requires Ni(2+) as cofactor.

Functionally, part of a complex that provides reducing equivalents for heterodisulfide reductase. In Methanothermobacter marburgensis (strain ATCC BAA-927 / DSM 2133 / JCM 14651 / NBRC 100331 / OCM 82 / Marburg) (Methanobacterium thermoautotrophicum), this protein is F420-non-reducing hydrogenase subunit A (mvhA).